The following is a 307-amino-acid chain: Predicted GPI-anchored protein 44 (307 aa).

Residues 1–22 (MLSTNNLLILLIFSFLITNVKS) form the signal peptide. N146 and N217 each carry an N-linked (GlcNAc...) asparagine glycan. The segment at 232–261 (TPQPLLETPSQESSAPNIDSTTPTTIDNTV) is disordered. Positions 239–254 (TPSQESSAPNIDSTTP) are enriched in polar residues. The GPI-anchor amidated glycine moiety is linked to residue G286. The propeptide at 287-307 (GAMGYPSISVALGLVFIAYLV) is removed in mature form.

The protein localises to the cell membrane. This chain is Predicted GPI-anchored protein 44 (PGA44), found in Candida albicans (strain SC5314 / ATCC MYA-2876) (Yeast).